The following is a 174-amino-acid chain: Co-chaperone protein HscB homolog (174 aa).

The 73-residue stretch at 2-74 (NYFELFSLLP…IQRAEHLLTL (73 aa)) folds into the J domain.

This sequence belongs to the HscB family. In terms of assembly, interacts with HscA and stimulates its ATPase activity.

Co-chaperone involved in the maturation of iron-sulfur cluster-containing proteins. Seems to help targeting proteins to be folded toward HscA. The sequence is that of Co-chaperone protein HscB homolog from Shewanella halifaxensis (strain HAW-EB4).